Consider the following 214-residue polypeptide: Orotate phosphoribosyltransferase (214 aa).

Lys-26 is a 5-phospho-alpha-D-ribose 1-diphosphate binding site. Phe-34 to Phe-35 is a binding site for orotate. Residues Tyr-72–Lys-73, Arg-99, Lys-100, Lys-103, His-105, and Asp-124–Ala-132 contribute to the 5-phospho-alpha-D-ribose 1-diphosphate site. 2 residues coordinate orotate: Thr-128 and Arg-157.

Belongs to the purine/pyrimidine phosphoribosyltransferase family. PyrE subfamily. Homodimer. It depends on Mg(2+) as a cofactor.

The enzyme catalyses orotidine 5'-phosphate + diphosphate = orotate + 5-phospho-alpha-D-ribose 1-diphosphate. Its pathway is pyrimidine metabolism; UMP biosynthesis via de novo pathway; UMP from orotate: step 1/2. Functionally, catalyzes the transfer of a ribosyl phosphate group from 5-phosphoribose 1-diphosphate to orotate, leading to the formation of orotidine monophosphate (OMP). The sequence is that of Orotate phosphoribosyltransferase from Pseudomonas fluorescens (strain SBW25).